Reading from the N-terminus, the 78-residue chain is DNA-directed RNA polymerase subunit Rpo5 (78 aa).

Belongs to the archaeal Rpo5/eukaryotic RPB5 RNA polymerase subunit family. In terms of assembly, part of the RNA polymerase complex.

It is found in the cytoplasm. The enzyme catalyses RNA(n) + a ribonucleoside 5'-triphosphate = RNA(n+1) + diphosphate. Functionally, DNA-dependent RNA polymerase (RNAP) catalyzes the transcription of DNA into RNA using the four ribonucleoside triphosphates as substrates. This chain is DNA-directed RNA polymerase subunit Rpo5, found in Methanococcoides burtonii (strain DSM 6242 / NBRC 107633 / OCM 468 / ACE-M).